We begin with the raw amino-acid sequence, 346 residues long: Integrin beta-1-binding protein 2 (346 aa).

Residues Cys5, Cys10, Cys24, and His27 each contribute to the Zn(2+) site. The CHORD 1 domain occupies 5–64 (CHNKGCGQHFDPQTNLPDSCCHHPGVPVFHDALKGWSCCRKRTVDFSEFLNIKGCTVGPH). The short motif at 28–31 (PGVP) is the SH3-binding element. Zn(2+) is bound by residues Cys42, Cys43, Cys59, and His64. The SH3-binding signature appears at 70-78 (PEAPQPEGP). The interval 70–113 (PEAPQPEGPATSSSLLEQKPPNTIPKSAETLRRERPKSDLPPKL) is disordered. Over residues 79-94 (ATSSSLLEQKPPNTIP) the composition is skewed to polar residues. A compositionally biased stretch (basic and acidic residues) spans 98-109 (ETLRRERPKSDL). Residues Cys150 and Cys155 each coordinate Zn(2+). The 60-residue stretch at 150–209 (CQNPGCDAVYQGSESDATPCTYHPGAPRFHEGMKSWSCCGIQTLDFGVFLAQPGCRVGRH) folds into the CHORD 2 domain. An SH2-binding motif is present at residues 159–162 (YQGS). Cys169 and His172 together coordinate Zn(2+). Positions 173 to 176 (PGAP) match the SH3-binding motif. Zn(2+)-binding residues include Cys187, Cys188, Cys204, and His209. The 90-residue stretch at 216-305 (LASCRHDWHQ…ADPGFWAQLE (90 aa)) folds into the CS domain. The SH2-binding signature appears at 235-238 (YGQI). The interval 311 to 346 (AEKSKSGVGLEMDEEESEDSDDDLSWTEEEEEAMGE) is disordered. Over residues 321 to 346 (EMDEEESEDSDDDLSWTEEEEEAMGE) the composition is skewed to acidic residues.

As to quaternary structure, interacts with beta-1 integrin subunit. This interaction is regulated by divalent cations, and it occurs only in absence of calcium.

Functionally, may play a role during maturation and/or organization of muscles cells. This chain is Integrin beta-1-binding protein 2 (ITGB1BP2), found in Sus scrofa (Pig).